The following is a 476-amino-acid chain: Thymidine phosphorylase (476 aa).

Residues 1-11 (MAAPGTPPPLA) show a composition bias toward pro residues. Residues 1-26 (MAAPGTPPPLAPETAGADSGGGSGEH) are disordered. A phosphothreonine mark is found at threonine 6 and threonine 475.

This sequence belongs to the thymidine/pyrimidine-nucleoside phosphorylase family. As to quaternary structure, homodimer.

The catalysed reaction is thymidine + phosphate = 2-deoxy-alpha-D-ribose 1-phosphate + thymine. It functions in the pathway pyrimidine metabolism; dTMP biosynthesis via salvage pathway; dTMP from thymine: step 1/2. In terms of biological role, catalyzes the reversible phosphorolysis of thymidine. The produced molecules are then utilized as carbon and energy sources or in the rescue of pyrimidine bases for nucleotide synthesis. The sequence is that of Thymidine phosphorylase (Tymp) from Rattus norvegicus (Rat).